The sequence spans 86 residues: MASEPRGSRKVKIGVVVSAKMEKTVVVRVERIFSHPQYLKVVRSSKKYYAHTELKVSEGDKVKIQETRPLSKLKRWRVIEHVGVVS.

Belongs to the universal ribosomal protein uS17 family. In terms of assembly, part of the 30S ribosomal subunit.

Its function is as follows. One of the primary rRNA binding proteins, it binds specifically to the 5'-end of 16S ribosomal RNA. This Chlamydia pneumoniae (Chlamydophila pneumoniae) protein is Small ribosomal subunit protein uS17.